A 155-amino-acid polypeptide reads, in one-letter code: MAGAYIVVRIKGQADVPHWAETTLKLLRLEKKHRATIIQSKENTRGMLDKVKHYVAWQEIDAGLAMELLTKRGRGPGYKKLTEKDLEGTDYPGIKELADALATGKASMSKIDRIKPWFALAPPRHGFKRSTKKMYGQKGVLGANRELSELVRSMI.

The protein belongs to the universal ribosomal protein uL30 family. As to quaternary structure, part of the 50S ribosomal subunit.

The protein is Large ribosomal subunit protein uL30 of Cenarchaeum symbiosum (strain A).